The following is a 152-amino-acid chain: Deoxyuridine 5'-triphosphate nucleotidohydrolase (152 aa).

Substrate is bound by residues 72 to 74, Asn85, and 89 to 91; these read RSG and TID.

It belongs to the dUTPase family. Mg(2+) serves as cofactor.

It catalyses the reaction dUTP + H2O = dUMP + diphosphate + H(+). Its pathway is pyrimidine metabolism; dUMP biosynthesis; dUMP from dCTP (dUTP route): step 2/2. Its function is as follows. This enzyme is involved in nucleotide metabolism: it produces dUMP, the immediate precursor of thymidine nucleotides and it decreases the intracellular concentration of dUTP so that uracil cannot be incorporated into DNA. This chain is Deoxyuridine 5'-triphosphate nucleotidohydrolase, found in Rhodopseudomonas palustris (strain ATCC BAA-98 / CGA009).